We begin with the raw amino-acid sequence, 200 residues long: Cytochrome c biogenesis ATP-binding export protein CcmA (200 aa).

In terms of domain architecture, ABC transporter spans 1-199; the sequence is MRLTGRGLRC…AARELRIGGA (199 aa). 35–42 is a binding site for ATP; sequence GANGAGKT.

This sequence belongs to the ABC transporter superfamily. CcmA exporter (TC 3.A.1.107) family. The complex is composed of two ATP-binding proteins (CcmA) and two transmembrane proteins (CcmB).

The protein resides in the cell inner membrane. The catalysed reaction is heme b(in) + ATP + H2O = heme b(out) + ADP + phosphate + H(+). Part of the ABC transporter complex CcmAB involved in the biogenesis of c-type cytochromes; once thought to export heme, this seems not to be the case, but its exact role is uncertain. Responsible for energy coupling to the transport system. The protein is Cytochrome c biogenesis ATP-binding export protein CcmA of Rhodopseudomonas palustris (strain BisB18).